A 132-amino-acid chain; its full sequence is Large ribosomal subunit protein uL14 (132 aa).

It belongs to the universal ribosomal protein uL14 family. Part of the 50S ribosomal subunit. Forms a cluster with proteins L3 and L24e, part of which may contact the 16S rRNA in 2 intersubunit bridges.

In terms of biological role, binds to 23S rRNA. Forms part of two intersubunit bridges in the 70S ribosome. The polypeptide is Large ribosomal subunit protein uL14 (Thermoplasma volcanium (strain ATCC 51530 / DSM 4299 / JCM 9571 / NBRC 15438 / GSS1)).